A 339-amino-acid polypeptide reads, in one-letter code: GDP-fucose transporter 1 (339 aa).

A run of 8 helical transmembrane segments spans residues 9-29 (SVRIAAVVAAYWTISISLVFL), 45-65 (LFVTWYQCVVTVICLFFLSLL), 82-102 (LSVAKQVLPLSAVFVGMITFN), 111-133 (VSFYNVGRSLTTVFNVICTYVIL), 136-156 (STSYKAVICCAVIIGGFLMGV), 165-185 (ISYSGVLFGVLASLCVSLNAI), 209-229 (ACFLFLPLMALLGEIGEVAHF), and 237-257 (FWLMMTIGGVFGIAIGYITGL). The interval 319–339 (AHTIQASKDDKALQEDGQTKV) is disordered. Positions 325–339 (SKDDKALQEDGQTKV) are enriched in basic and acidic residues.

It belongs to the TPT transporter family. SLC35C subfamily.

The protein resides in the golgi apparatus membrane. It catalyses the reaction GMP(out) + GDP-beta-L-fucose(in) = GMP(in) + GDP-beta-L-fucose(out). In terms of biological role, antiporter specific for GDP-l-fucose and depending on the concomitant reverse transport of GMP. Involved in GDP-fucose import from the cytoplasm into the Golgi lumen. The protein is GDP-fucose transporter 1 (slc35c1) of Nematostella vectensis (Starlet sea anemone).